Here is a 361-residue protein sequence, read N- to C-terminus: uncharacterized protein (361 aa).

A signal peptide spans 1-28 (MSKSKFTKIIVVICIAAMFITGTSILSF).

This is an uncharacterized protein from Ruminiclostridium cellulolyticum (strain ATCC 35319 / DSM 5812 / JCM 6584 / H10) (Clostridium cellulolyticum).